The sequence spans 63 residues: Large ribosomal subunit protein bL35 (63 aa).

Positions 1–43 (MKMRTHSGAKKRLKVLSSGKVKKKSTRMRHLNSHMSSKTKRQL) are enriched in basic residues. The tract at residues 1-45 (MKMRTHSGAKKRLKVLSSGKVKKKSTRMRHLNSHMSSKTKRQLGK) is disordered.

It belongs to the bacterial ribosomal protein bL35 family.

The sequence is that of Large ribosomal subunit protein bL35 from Bdellovibrio bacteriovorus (strain ATCC 15356 / DSM 50701 / NCIMB 9529 / HD100).